Reading from the N-terminus, the 377-residue chain is 5-hydroxytryptamine receptor 1D (377 aa).

N-linked (GlcNAc...) asparagine glycosylation is found at asparagine 5, asparagine 17, and asparagine 21. 3 helical membrane passes run 39–64, 76–97, and 110–134; these read ISLA…TTIL, LIGS…ISIA, and LCDI…VIAL. Cysteine 111 and cysteine 188 are joined by a disulfide. 2 residues coordinate serotonin: aspartate 118 and cysteine 122. A DRY motif; important for ligand-induced conformation changes motif is present at residues 135-137; sequence DRY. 4 consecutive transmembrane segments (helical) span residues 155 to 176, 195 to 218, 301 to 326, and 336 to 359; these read AAAM…PLFW, ISYT…VLYG, KTLG…VLPI, and GLFD…YTVF. Residue serine 321 coordinates serotonin. An NPxxY motif; important for ligand-induced conformation changes and signaling motif is present at residues 352-356; that stretch reads NPIIY.

The protein belongs to the G-protein coupled receptor 1 family. In terms of assembly, homodimer. Heterodimer with HTR1B.

It is found in the cell membrane. Its function is as follows. G-protein coupled receptor for 5-hydroxytryptamine (serotonin). Also functions as a receptor for ergot alkaloid derivatives, various anxiolytic and antidepressant drugs and other psychoactive substances. Ligand binding causes a conformation change that triggers signaling via guanine nucleotide-binding proteins (G proteins) and modulates the activity of downstream effectors, such as adenylate cyclase. HTR1D is coupled to G(i)/G(o) G alpha proteins and mediates inhibitory neurotransmission by inhibiting adenylate cyclase activity. Regulates the release of 5-hydroxytryptamine in the brain, and thereby affects neural activity. May also play a role in regulating the release of other neurotransmitters. May play a role in vasoconstriction. The polypeptide is 5-hydroxytryptamine receptor 1D (HTR1D) (Oryctolagus cuniculus (Rabbit)).